The following is a 391-amino-acid chain: Multidrug resistance protein MdtL (391 aa).

12 consecutive transmembrane segments (helical) span residues 4-24 (FLICSFALVLLYPAGIDMYLV), 42-62 (IAFSVYLAGMAAAMLFAGKVA), 69-89 (PVAIPGAALFIIASVFCSLAE), 93-113 (LFLAGRFLQGLGAGCCYVVAF), 131-151 (LLNGITCIIPVLAPVLGHLIM), 158-178 (SLFWAMAMMGIAVLMLSLFIL), 203-222 (FFLSRVVITTLSVSVILTFV), 245-265 (ALTAGVSMTVSFSTPFALGIF), 269-289 (TLMITSQVLFLAAGITLAVSP), 293-313 (VSLFGITLICAGFSVGFGVAM), 331-351 (LGIAQVCGSSLWIWLAAVVGI), and 356-376 (MLIGILIACSIVSLLLIMFVA).

It belongs to the major facilitator superfamily. DHA1 family. MdtL (TC 2.A.1.2.22) subfamily.

The protein localises to the cell inner membrane. Confers resistance to chloramphenicol. This is Multidrug resistance protein MdtL from Escherichia coli O9:H4 (strain HS).